A 257-amino-acid chain; its full sequence is Phosphonates import ATP-binding protein PhnC (257 aa).

The ABC transporter domain occupies 2–246 (IEFRNVSKVY…KFAEIYGDVA (245 aa)). An ATP-binding site is contributed by 35 to 42 (GLSGAGKS).

The protein belongs to the ABC transporter superfamily. Phosphonates importer (TC 3.A.1.9.1) family. As to quaternary structure, the complex is composed of two ATP-binding proteins (PhnC), two transmembrane proteins (PhnE) and a solute-binding protein (PhnD).

It localises to the cell membrane. It catalyses the reaction phosphonate(out) + ATP + H2O = phosphonate(in) + ADP + phosphate + H(+). Its function is as follows. Part of the ABC transporter complex PhnCDE involved in phosphonates import. Responsible for energy coupling to the transport system. This chain is Phosphonates import ATP-binding protein PhnC, found in Bacillus cereus (strain ATCC 10987 / NRS 248).